Consider the following 186-residue polypeptide: Ribosome-recycling factor (186 aa).

It belongs to the RRF family.

Its subcellular location is the cytoplasm. Its function is as follows. Responsible for the release of ribosomes from messenger RNA at the termination of protein biosynthesis. May increase the efficiency of translation by recycling ribosomes from one round of translation to another. The sequence is that of Ribosome-recycling factor from Polynucleobacter asymbioticus (strain DSM 18221 / CIP 109841 / QLW-P1DMWA-1) (Polynucleobacter necessarius subsp. asymbioticus).